Reading from the N-terminus, the 444-residue chain is Multidrug resistance protein MdtA (444 aa).

The signal sequence occupies residues 1–20 (MKSQSKRTSRLFVFVGVVVA). Polar residues predominate over residues 37–52 (NNTSGAQQSARGQDTS). 2 disordered regions span residues 37-60 (NNTS…RNTP) and 399-444 (PRSA…AEKS). Positions 409–419 (ASAEKAAAEAE) are enriched in low complexity. Over residues 435-444 (ARSTTAAEKS) the composition is skewed to polar residues.

Belongs to the membrane fusion protein (MFP) (TC 8.A.1) family. In terms of assembly, part of a tripartite efflux system composed of MdtA, MdtB and MdtC.

The protein resides in the cell inner membrane. The chain is Multidrug resistance protein MdtA from Yersinia pseudotuberculosis serotype I (strain IP32953).